The sequence spans 1268 residues: Neurocan core protein (1268 aa).

The first 22 residues, 1 to 22, serve as a signal peptide directing secretion; that stretch reads MGAGSVWASGLLLLWLLLLVAG. The Ig-like V-type domain occupies 37 to 157; sequence RMLKSGSGPV…EQDLVTLEVT (121 aa). 5 disulfides stabilise this stretch: Cys-58/Cys-139, Cys-181/Cys-252, Cys-205/Cys-226, Cys-279/Cys-354, and Cys-303/Cys-324. The N-linked (GlcNAc...) asparagine glycan is linked to Asn-121. 2 Link domains span residues 159-254 and 258-356; these read VVFH…YCFA and GGEV…YCFR. N-linked (GlcNAc...) asparagine glycosylation is present at Asn-339. Disordered stretches follow at residues 363–391, 406–442, 472–540, and 574–630; these read QHGD…ELKP, PLMS…SWPS, PLGT…DQSH, and ISPS…LQAS. Ser-380 and Ser-410 each carry an O-linked (Xyl...) (chondroitin sulfate) serine glycan. The span at 419 to 430 shows a compositional bias: polar residues; sequence TWTQAPEETLGS. Residues 575–585 show a composition bias toward low complexity; sequence SPSVPSTESTP. Positions 608 to 617 are enriched in pro residues; it reads PSEPPAPSPG. A compositionally biased stretch (low complexity) spans 618–630; the sequence is PSEALSAVSLQAS. Residue Asn-742 is glycosylated (N-linked (GlcNAc...) asparagine). Residues 960–996 enclose the EGF-like 1 domain; it reads PTDPCENNPCLHGGTCHTNGTVYGCSCDQGYAGENCE. 11 disulfide bridges follow: Cys-964/Cys-975, Cys-969/Cys-984, Cys-986/Cys-995, Cys-1002/Cys-1013, Cys-1007/Cys-1022, Cys-1024/Cys-1033, Cys-1040/Cys-1051, Cys-1068/Cys-1160, Cys-1136/Cys-1152, Cys-1167/Cys-1210, and Cys-1196/Cys-1223. An N-linked (GlcNAc...) asparagine glycan is attached at Asn-978. Positions 998–1034 constitute an EGF-like 2; calcium-binding domain; that stretch reads DIDDCLCSPCENGGTCIDEVNGFICLCLPSYGGSLCE. In terms of domain architecture, C-type lectin spans 1036 to 1165; it reads DTEGCDRGWH…LPYVCKKGTV (130 aa). A Sushi domain is found at 1165-1225; that stretch reads VLCGPPPAVE…WDRPQIMCIK (61 aa). Asn-1175 is a glycosylation site (N-linked (GlcNAc...) asparagine). Positions 1228–1255 are enriched in basic residues; that stretch reads RSHRMRRHHHHPHRHHKPRKEHRKHKRH. Residues 1228 to 1268 are disordered; sequence RSHRMRRHHHHPHRHHKPRKEHRKHKRHPAEDWEKDEGDFC.

This sequence belongs to the aggrecan/versican proteoglycan family. Post-translationally, O-glycosylated; contains chondroitin sulfate. Brain.

The protein localises to the secreted. May modulate neuronal adhesion and neurite growth during development by binding to neural cell adhesion molecules (NG-CAM and N-CAM). Chondroitin sulfate proteoglycan; binds to hyaluronic acid. The chain is Neurocan core protein (Ncan) from Mus musculus (Mouse).